A 427-amino-acid chain; its full sequence is Glutamate-1-semialdehyde 2,1-aminomutase (427 aa).

Residue K265 is modified to N6-(pyridoxal phosphate)lysine.

This sequence belongs to the class-III pyridoxal-phosphate-dependent aminotransferase family. HemL subfamily. Homodimer. Pyridoxal 5'-phosphate is required as a cofactor.

The protein localises to the cytoplasm. The catalysed reaction is (S)-4-amino-5-oxopentanoate = 5-aminolevulinate. Its pathway is porphyrin-containing compound metabolism; protoporphyrin-IX biosynthesis; 5-aminolevulinate from L-glutamyl-tRNA(Glu): step 2/2. This Pseudomonas putida (strain ATCC 700007 / DSM 6899 / JCM 31910 / BCRC 17059 / LMG 24140 / F1) protein is Glutamate-1-semialdehyde 2,1-aminomutase.